The primary structure comprises 171 residues: UPF0763 protein HPP12_0677 (171 aa).

This sequence belongs to the UPF0763 family.

This chain is UPF0763 protein HPP12_0677, found in Helicobacter pylori (strain P12).